Reading from the N-terminus, the 322-residue chain is Ribose 1,5-bisphosphate isomerase (322 aa).

Substrate contacts are provided by residues 20–23 (RGAG) and R63. C133 acts as the Proton acceptor in catalysis. Residue 135–137 (SKA) coordinates substrate. D202 acts as the Proton donor in catalysis. Substrate contacts are provided by residues 212-213 (NK) and K238.

Belongs to the eIF-2B alpha/beta/delta subunits family. R15P isomerase subfamily. In terms of assembly, homohexamer; trimer of dimers.

It carries out the reaction alpha-D-ribose 1,5-bisphosphate = D-ribulose 1,5-bisphosphate. Its activity is regulated as follows. Is highly activated in the presence of AMP, with an increase of &gt;40-fold in activity levels. Among other nucleotides, isomerase activity is slightly increased in the presence of GMP, but CMP, UMP, TMP, and NAD(+) have no effect; therefore, AMP is likely the major activator of R15P isomerase in vivo. To a lesser extent, various compounds with an adenosyl moiety, such as dAMP, adenosine, or methylthioadenosine, can also act as activators. The regulation of this enzyme by AMP prevents excess degradation of intracellular AMP by the archaeal AMP degradation pathway. Functionally, catalyzes the isomerization of ribose 1,5-bisphosphate (R15P) to ribulose 1,5-bisphosphate (RuBP), the CO(2) acceptor and substrate for RubisCO. Only accepts the alpha-anomer of D-ribose 1,5-bisphosphate as substrate, being inactive on the beta-anomer. Displays a strict substrate specificity, since other phosphorylated sugars such as R5P, ribose, G16P, G6P, G1P, FBP, F6P, and PRPP, are not substrates. Functions in an archaeal AMP degradation pathway, together with AMP phosphorylase and RubisCO. The chain is Ribose 1,5-bisphosphate isomerase from Thermococcus kodakarensis (strain ATCC BAA-918 / JCM 12380 / KOD1) (Pyrococcus kodakaraensis (strain KOD1)).